The chain runs to 29 residues: Galanin (29 aa).

A29 is subject to Alanine amide.

It belongs to the galanin family.

It localises to the secreted. In terms of biological role, contracts smooth muscle of the gastrointestinal and genitourinary tract, regulates growth hormone release, modulates insulin release, and may be involved in the control of adrenal secretion. The protein is Galanin (gal) of Pelophylax ridibundus (Marsh frog).